A 560-amino-acid chain; its full sequence is (E)-beta-farnesene synthase (560 aa).

Residues aspartate 312, aspartate 316, aspartate 457, and glutamate 465 each coordinate Mg(2+). The short motif at 312-316 (DDTFD) is the DDXXD motif element.

This sequence belongs to the terpene synthase family. It depends on Mg(2+) as a cofactor. The cofactor is Co(2+). Mn(2+) is required as a cofactor.

It is found in the cytoplasm. It carries out the reaction (2E,6E)-farnesyl diphosphate = (E)-beta-farnesene + diphosphate. Its pathway is secondary metabolite biosynthesis; terpenoid biosynthesis. Functionally, sesquiterpene cyclase catalyzing the production of beta-farnesene from farnesyl diphosphate. This chain is (E)-beta-farnesene synthase, found in Citrus junos (Yuzu).